Reading from the N-terminus, the 3119-residue chain is Huntingtin (3119 aa).

The disordered stretch occupies residues 1 to 65 (MATLEKLMKA…LPGPAEEPLH (65 aa)). N6-acetyllysine is present on Lys9. Pro residues predominate over residues 24–60 (QPPPQAPPPPPPPPPQPPQPPPQGQPPPPPPPLPGPA). Lys155 and Lys213 each carry N6-acetyllysine. HEAT repeat units follow at residues 183 to 220 (PYLV…SFGN) and 225 to 262 (NEIK…HSRR). The residue at position 322 (Lys322) is an N6-acetyllysine. A phosphoserine mark is found at Ser396, Ser398, and Ser411. Lys421 bears the N6-acetyllysine mark. An interaction with ZDHHC17 region spans residues 470-481 (GHDIITEQPRSQ). Residues 495-558 (DLTSAATDGD…DSAVTPSDSS (64 aa)) form a disordered region. Positions 529–558 (DGTQASSPISDSSQTTTEGPDSAVTPSDSS) are enriched in polar residues. Residue Gly530 is the site of N-myristoyl glycine attachment. Ser620 and Ser623 each carry phosphoserine. 2 HEAT repeats span residues 782–819 (FSLV…SLCS) and 882–920 (KLQE…KLFY). The segment at 1146–1204 (KAALPSLTNPPSLSPIRRKGKEKEPGEQASTPMSPKKVGEASAASRQSDTSGPVTASKS) is disordered. Residues 1149 to 1160 (LPSLTNPPSLSP) are compositionally biased toward low complexity. Phosphoserine; by CDK5 is present on residues Ser1159 and Ser1179. Positions 1189–1204 (ASRQSDTSGPVTASKS) are enriched in polar residues. One copy of the HEAT 5 repeat lies at 1404–1441 (LFEPLVIKALKQYTTTTSVQLQKQVLDLLAQLVQLRVN). The residue at position 1853 (Ser1853) is a Phosphoserine. The Nuclear export signal signature appears at 2372-2381 (IVISLARLPL). Positions 2610 to 2637 (EEEWDEEEEEESDVPAPTSPPVSPVNSR) are disordered. Positions 2611–2622 (EEWDEEEEEESD) are enriched in acidic residues.

It belongs to the huntingtin family. As to quaternary structure, interacts with PFN1. Interacts through its N-terminus with PRPF40A. Interacts with PQBP1. Interacts with SETD2. Interacts with SH3GLB1. Interacts with SYVN. Interacts with TPR; the interaction is inhibited by forms of Huntingtin with expanded polyglutamine stretch. Interacts with ZDHHC13 (via ANK repeats). Interacts with ZDHHC17 (via ANK repeats). Interacts with F8A1/F8A2/F8A3. Found in a complex with F8A1/F8A2/F8A3, HTT and RAB5A; mediates the recruitment of HTT by RAB5A. Phosphorylation at Ser-1159 and Ser-1179 by CDK5 in response to DNA damage in nuclei of neurons protects neurons against polyglutamine expansion as well as DNA damage mediated toxicity. Post-translationally, cleaved by caspases downstream of the polyglutamine stretch. In terms of processing, myristoylated at Gly-530, following proteolytic cleavage at Asp-529. As to expression, the highest level is seen throughout the brain, but it is also found in the stomach, heart, testis, adipose tissue, muscle, spleen, liver, and kidney.

The protein resides in the cytoplasm. It is found in the nucleus. Its subcellular location is the cytoplasmic vesicle. It localises to the autophagosome. May play a role in microtubule-mediated transport or vesicle function. In terms of biological role, promotes the formation of autophagic vesicles. The polypeptide is Huntingtin (Htt) (Mus musculus (Mouse)).